A 63-amino-acid polypeptide reads, in one-letter code: MKLGAFLLLVSLITLSLEVQELQAAVRPLQLLGTCAELCRGDWDCGPEEQCVSIGCSHICTTN.

The first 24 residues, 1 to 24, serve as a signal peptide directing secretion; sequence MKLGAFLLLVSLITLSLEVQELQA. Positions 25 to 63 constitute a WAP; atypical domain; that stretch reads AVRPLQLLGTCAELCRGDWDCGPEEQCVSIGCSHICTTN. 3 cysteine pairs are disulfide-bonded: Cys35-Cys56, Cys39-Cys51, and Cys45-Cys60.

In terms of tissue distribution, predominantly expressed in white adipose tissue and liver.

It is found in the secreted. Functionally, may promote activation of the metalloproteinase MMP2. The protein is Protein Wfdc21 of Mus musculus (Mouse).